The chain runs to 475 residues: FAD-dependent monooxygenase spyC (475 aa).

A signal peptide spans 1 to 24 (MTAKPPFKVIIVGGSIAGLTLAHC). The FAD site is built by glutamate 36, glycine 50, arginine 109, aspartate 310, and alanine 323. Residues 444-464 (LLIPFLYPVVAFSLCVLAWIG) form a helical membrane-spanning segment.

This sequence belongs to the paxM FAD-dependent monooxygenase family. Requires FAD as cofactor.

Its subcellular location is the membrane. It catalyses the reaction (2E,6E,10E)-geranylgeranyl-triacetate lactone + AH2 + O2 = (S)-(2E,6E,10E)-epoxygeranylgeranyl-triacetate lactone + A + H2O. It participates in secondary metabolite biosynthesis; terpenoid biosynthesis. FAD-dependent monooxygenase spyC; part of the gene cluster that mediates the biosynthesis of meroterpenoids called sartorypyrones. Within the pathway, spyC catalyzes the epoxidation of geranylgeranyl-triacetate lactone at the terminal olein to yield epoxygeranylgeranyl-triacetate lactone. The biosynthesis of sartorypyrones begins with the production of triacetic acid lactone (TAL) by the NR-PKS spyA using one molecule of acetyl-CoA and two molecules of malonyl-CoA. The prenyltransferase spyF then conjugates geranylgeranyl pyrophosphate (GGPP) to TAL to form geranylgeranyl-triacetate lactone, for which the pathway-specific geranylgeranyl pyrophosphate synthase (GGPS) spyE is required to provide GGPP. Subsequently, geranylgeranyl-triacetate lactone is epoxidized at the terminal olein by the FAD-dependent monooxygenase spyC, followed by cyclization of the terpenoid component catalyzed by the terpene cyclase spyD to produce both the bicyclic sartorypyrone F and the monocyclic sartorypyrone D. Finally, the last step of the biosynthesis involves the acetylation of the meroterpenoids sartorypyrones D and F by the acetyltransferase SpyB to produce sartorypyrones A and G, respectively. The sequence is that of FAD-dependent monooxygenase spyC from Aspergillus fumigatus (strain ATCC MYA-4609 / CBS 101355 / FGSC A1100 / Af293) (Neosartorya fumigata).